The primary structure comprises 728 residues: MSTLPRFDSVDLGNAPVPADAARRFEELAAKAGTGEAWETAEQIPVGTLFNEDVYKDMDWLDTYAGIPPFVHGPYATMYAFRPWTIRQYAGFSTAKESNAFYRRNLAAGQKGLSVAFDLPTHRGYDSDNPRVAGDVGMAGVAIDSIYDMRELFAGIPLDQMSVSMTMNGAVLPILALYVVTAEEQGVKPEQLAGTIQNDILKEFMVRNTYIYPPQPSMRIISEIFAYTSANMPKWNSISISGYHMQEAGATADIEMAYTLADGVDYIRAGESVGLNVDQFAPRLSFFWGIGMNFFMEVAKLRAARMLWAKLVHQFGPKNPKSMSLRTHSQTSGWSLTAQDVYNNVVRTCIEAMAATQGHTQSLHTNSLDEAIALPTDFSARIARNTQLFLQQESGTTRVIDPWSGSAYVEELTWDLARKAWGHIQEVEKVGGMAKAIEKGIPKMRIEEAAARTQARIDSGRQPLIGVNKYRLEHEPPLDVLKVDNSTVLAEQKAKLVKLRAERDPEKVKAALDKITWAAGNPDDKDPDRNLLKLCIDAGRAMATVGEMSDALEKVFGRYTAQIRTISGVYSKEVKNTPEVEEARELVEEFEQAEGRRPRILLAKMGQDGHDRGQKVIATAYADLGFDVDVGPLFQTPEETARQAVEADVHVVGVSSLAGGHLTLVPALRKELDKLGRPDILITVGGVIPEQDFDELRKDGAVEIYTPGTVIPESAISLVKKLRASLDA.

(R)-methylmalonyl-CoA-binding residues include Y75, M78, R82, T85, R87, Y89, and S114. 2 residues coordinate cob(II)alamin: F117 and A139. (R)-methylmalonyl-CoA contacts are provided by T195 and Q197. The cob(II)alamin site is built by V206 and R207. (R)-methylmalonyl-CoA contacts are provided by R207, H244, R283, and S285. G333, E370, A373, G609, H610, D611, R612, S655, L657, G686, and T709 together coordinate cob(II)alamin. Positions 597 to 728 constitute a B12-binding domain; sequence RPRILLAKMG…VKKLRASLDA (132 aa).

It belongs to the methylmalonyl-CoA mutase family. Heterodimer of an alpha and a beta chain. Adenosylcob(III)alamin serves as cofactor.

The enzyme catalyses (R)-methylmalonyl-CoA = succinyl-CoA. Catalyzes the reversible conversion of succinyl-CoA to (R)-methylmalonyl-CoA through a radical mechanism. Is involved in the fermentation of pyruvate to propanoate that occurs in Propionibacteria. This chain is Methylmalonyl-CoA mutase large subunit (mutB), found in Propionibacterium freudenreichii subsp. shermanii.